Here is an 890-residue protein sequence, read N- to C-terminus: Protein FAM171A1 (890 aa).

The N-terminal stretch at 1-21 (MSRSATLLLCLLGCHVWKAVT) is a signal peptide. The Extracellular portion of the chain corresponds to 22-303 (KTLREPGAGA…VTQDITTYHT (282 aa)). Asn159, Asn190, and Asn194 each carry an N-linked (GlcNAc...) asparagine glycan. A helical membrane pass occupies residues 304 to 324 (VFLLAILGGMAFILLVLLCLL). Residues 325–890 (LYYCRRKCLK…ERPLMAFNIK (566 aa)) lie on the Cytoplasmic side of the membrane. Phosphoserine occurs at positions 358, 360, 371, 422, 443, and 525. Disordered stretches follow at residues 730–759 (AGRNGSNDASLDSGVDMNEPKSARKGRGDA) and 818–890 (EGSS…FNIK). Residues 747 to 757 (NEPKSARKGRG) are compositionally biased toward basic and acidic residues. The segment covering 822 to 833 (RRSGGQLPSLQE) has biased composition (polar residues). 2 positions are modified to phosphoserine: Ser849 and Ser855. A compositionally biased stretch (acidic residues) spans 858–869 (EEEEDDDDDDQG). Residues 870-883 (EDKKSPWQKREERP) are compositionally biased toward basic and acidic residues.

This sequence belongs to the FAM171 family. In terms of assembly, interacts with ADAM10, NSG1 and OAZ1. Expressed in heart, brain, liver, skeletal muscle, kidney and pancreas. In brain, expressed by glia, pyramidal neurons and astrocytes (at protein level). Highly expressed in placental trophoblasts.

It localises to the cell membrane. In terms of biological role, involved in the regulation of the cytoskeletal dynamics, plays a role in actin stress fiber formation. The sequence is that of Protein FAM171A1 from Homo sapiens (Human).